Here is a 253-residue protein sequence, read N- to C-terminus: Indole-3-glycerol phosphate synthase (253 aa).

The protein belongs to the TrpC family.

The catalysed reaction is 1-(2-carboxyphenylamino)-1-deoxy-D-ribulose 5-phosphate + H(+) = (1S,2R)-1-C-(indol-3-yl)glycerol 3-phosphate + CO2 + H2O. Its pathway is amino-acid biosynthesis; L-tryptophan biosynthesis; L-tryptophan from chorismate: step 4/5. This chain is Indole-3-glycerol phosphate synthase, found in Bacillus thuringiensis (strain Al Hakam).